A 330-amino-acid polypeptide reads, in one-letter code: DNA-directed RNA polymerase subunit alpha (330 aa).

Residues 1–232 form an alpha N-terminal domain (alpha-NTD) region; that stretch reads MAILAFQKPE…SHFSLFAENK (232 aa). The interval 248–330 is alpha C-terminal domain (alpha-CTD); the sequence is EDSLHMRQLL…DISKYKLDKD (83 aa).

It belongs to the RNA polymerase alpha chain family. In terms of assembly, homodimer. The RNAP catalytic core consists of 2 alpha, 1 beta, 1 beta' and 1 omega subunit. When a sigma factor is associated with the core the holoenzyme is formed, which can initiate transcription.

The enzyme catalyses RNA(n) + a ribonucleoside 5'-triphosphate = RNA(n+1) + diphosphate. In terms of biological role, DNA-dependent RNA polymerase catalyzes the transcription of DNA into RNA using the four ribonucleoside triphosphates as substrates. The chain is DNA-directed RNA polymerase subunit alpha from Porphyromonas gingivalis (strain ATCC BAA-308 / W83).